A 226-amino-acid chain; its full sequence is MSCCAYFRGRDCLQTYEDHITQALEACERLRPYYGRWMEKAFGTADAAALAVEFHDLGKLAKAYIAGNRARYRHEVLGAYFALKTLQTEARYYVAAAVALHHEPMILAAYAGELGERAIHVSTLRAMLKDSDLSLGCTPNYSYRPEVAAALREWASRPPTADDVADAFQELAVYLSGGAPEEARVKRLRVAGLLHVLTVCDNWGARGRPGEGTFISRYMTVSELGL.

The region spanning 9-204 (GRDCLQTYED…HVLTVCDNWG (196 aa)) is the HD Cas3-type domain. Mg(2+) contacts are provided by Asp-56, His-74, His-101, and His-102.

It belongs to the CRISPR-associated nuclease Cas3-HD family. As to quaternary structure, monomer. Can form a Cascade complex with Csa5, Cas7, Cas5a, Cas3 and Cas8a2. It depends on Mg(2+) as a cofactor.

CRISPR (clustered regularly interspaced short palindromic repeat), is an adaptive immune system that provides protection against mobile genetic elements (viruses, transposable elements and conjugative plasmids). CRISPR clusters contain sequences complementary to antecedent mobile elements and target invading nucleic acids. CRISPR clusters are transcribed and processed into CRISPR RNA (crRNA). Cas3 plus Cascade participate in CRISPR interference, the third stage of CRISPR immunity. Acts as a ssDNA and ssRNA nuclease, probably with both exo- and endonuclease activities. Activity is higher for DNA than RNA. In Thermoproteus tenax (strain ATCC 35583 / DSM 2078 / JCM 9277 / NBRC 100435 / Kra 1), this protein is CRISPR-associated endonuclease Cas3-HD (cas3').